A 5255-amino-acid chain; its full sequence is MGIVATVLLWVVTEAARGRWCERTEQVTEEEVVMPRREDVVPCPSMYQYSLAGWRIDLNRMRQVYGGERGVPPTSTHPGAAMCYIYRPPETQLVVRNRTVRACCAGWSGPHCTEVEGSLGQCHASWQCQDALGAHNLSTVSMAECCRQPWGHSWRNGSSALCFACSRQPLTGDVPLPTAPRGPAARHRGPTASCTVWAGSRYRSFDGRHFGFQGECAYSLAASTDSTWAVSITPGSPPVLHMTFGLDTVVAQGHNISVNGVAVPEGRQHLHGGISVTWLGDFVAVESGLGVHLKLDGRGTVYVTVSAELRGSTKGLCGPYNDDPIDDFLRVEGDVAPLAASFGNSWRIPDANPELSCSDAVEPSPGCAMGSTAQRAAEAMCGMLLTDPFRQCHEAVDPHGFYEACLELHCREGGTGPSPPPAVCDTLATYVRDCAQRRAYIEWRRPGLCEQQCGHGQRYSDCVSSCPASCMAAGTAEEGHCRDDCASGCECTPGLLLDRGACIPQSACPCLHRGHIYAPGQSIRQRCNQCTCRGGRWLCTQDRCAAECAVLGDLHYITFDRRRFSFPGACEYTLVQDFVEGTLRITAEQEACGGHQPLSCLRALSITVPGASARLHSTGEVVVDGRVVPLPFASAALTVRRASSSFLLLQTFGAHLLWGLETPAAYITLQPAFANKVRGLCGTYNWDQRDDFATPAGDVEVGVTAFANKYRVSTDCPVLSPVPFEPCSTYAPRRELAAAACAILHGASFQPCHHLVDREPFHQLCLYDVCACPAGKHCLCPALAAYARECAQEGAALSWRNESFCGTQCRGGQVYQECSSPCGRTCADLRLDGASSCPSLDNICVSGCNCPEGPVLDDGGQCVPPGVCPCQHSSQLYPAGSKIRQGCNACMCTAGTWSCTDAPCPDAAFCPGDLVYVFGSCLRTCDSAEPNGTCTGIADGCVCPPGTVFLDERCVPPEECPCQHNGRLYHPNDTIVRDCNTCVCRQQRWQCSSEDCMGTCVATGDPHYITFDGRAFSFLGDCEYVLVREANGLFTVTAENVPCGTSGVTCTKSVVVEMGNTVVHMLRGRDVTVNGVSVRPPKVYSGNGLTLQRAGIFLLLLSRLGLAVLWDGGTRVYIRLQPQHRGRVVGLCGNFDRDAENDLASQQGVLEPTAELFGNSWRVSLLCPEVDGTTAQHPCTDNPHRATWARKRCSILTQRLFAPCHDEVPCQHFYDWCIFDACGCDSGGDCECLCTAIATYAEECSQRGIHIRWRSQDLCPMQCDGGQEYSACGPPCPQTCRNLGLELPEHCDTMSCLEGCFCPEGKVLHEGSCIDPAECPCFWQGIAFPDSAVVQQGCRNCSCTAGLWQCVPTAEPCPAQPHCPDSEFPCRSGGRCVPGAWLCDNEDDCGDGSDEVCALHCAPHQHRCADGQCVPWGARCDGLSDCGDGSDERGCPPPPCAPPEFRCASGRCIPRAHVCNGELDCGFADDSDEAGCSPSCSVGEFQCAAGRCVPYPHRCNGHDDCGDFSDERGCVCPAGHFQCPDAQCLPPAALCDGMQDCGDGTDEAFCPDRITCAPGQLPCPDGSCVSQVKLCDGIWDCRDGWDESSVRCMVSWAPPAPTQLPTVPANGTAAPVCGPYEFPCRSGQCVPRGWVCDSEADCPDNSDELGCNRSCVLGHFPCALGAHCIHYDHLCDGIPHCPDHSDESDDNCGSTQIPPCPGHFVCNNRVCVNATRVCDGALDCPQGEDELACEGYVPTGERNQTVGPCAEYSCRDGDCITFKQVCNGLPDCRDGDMASGWLPSDEWDCGQWGPWAPWGICSHSCGLGQQLRARECSQRTPGVLHQCHGEATQARPCFSTACPVDGAWSEWTMWSNCTQGCEGVVVRQRHCQPPRDGGRPCAALPATAHATLEIGTCQQDGCPPASCPGGLQPRPCAPCPASCADLASRAPCRREQCTPGCWCAEGLVLDGERGCVRPRECRCEVDGLRYWPGQRMKLNCRLCTCLDGQPRRCRHNPACSVSCSWSAWSPWGECLGPCGVQSIQWSFRSPSHPGKHGTNRQCRGIYRKARRCQTEPCQECEHQGRSRAQGDRWRWGPCHVCQCLPGPEVRCSPYCARSAVGCPQGQVLVEGKGDSCCFCAQIGDNVTAIPTALTMEPPSTMPGEPSDSPLPTFPLPSPGDPCYSPLGIASLPDSSFTASAEQQQHPARAARLHHVSPGLELQGWAPPADTVPGLPSHLPFLQLDLLQTTNLTGVVVQGAGAGDAFITAFQLQFSTDGNRWHNYQQLFQGNWDATTPVVQPLDHMVQARYIRILPQGFHNAIFLRAELLGCPTVPLDLAVTTAVTPAPCGTGEFWCGVSCVTASRRCDGATDCPGGADEAGCEPPSSTTLPTHPASLTTPGSAGILGLTAEPPVAPPAAVPEGTSAWLTVGSTSPAVPSTTGLPGVPTATITPRGPPSAGPPSPGMAAVTVSHPVMGPPALPMPPTGVPTPTSAEPPLPRLLCPPDQFLCDALGCVDAAMVCDGQQDCLDGSDEAHCGALPTSGSSPSPLAWPSSPPPTCSPKQFSCGTGECLALEKRCDLSRDCADGSDESSCADCILSPWGGWSQCSHSCGLGVTSRQRVLLRGALPGGTCHTPRLDTRACFLRACPVPGAWAAWGVWSSCDAECGGGMRSRTRSCTDPPPKNGGQPCAGEALQSQPCNLQPCGDTRECGPGMVLVQEGDCVQGLVPPCPQVCGDLSATSSCQSPCQEGCRCPPGLFLQEGTCVNASQCHCHQGQQRWLPSQVFLRDGCSQCVCRDGVVTCEDTACPIACAWSAWSLWTLCDRSCGVGMQERFRSPSNPAAANGGAPCDGDTREVRECHTPCATAEPSSGWSSWTPWSPCSRSCFHHVDQRGRRHRFRHCEGMGTCPGLGVQEEPCDTAPCPVAGVWMPWSAWSECSAPCDAGVQTRSRTCTPPAFGGAECTGPHLQTRNCNTRPCGAQCPDTMQYLTAEECRHSEGRCPWICQDLGAGVACTAQCQPGCHCPAGLLLQNGTCVPPSHCLCHHRGHLYQPGDINALDTCNNCTCVTGQMVCSTETCPVPCTWSNWTAWSTCSHSCDVGMRRRYRVPIVPPLAGGGPPCQGPSMEVEFCSLQPCRAVAPWGPWSECSVSCGGGYRNRTRDGPPLHSLEFSTCNPAPCPGKEPGVCPPGKQWQACAQGAASCAELSAAPPADGSCHPGCYCPPGALLLNNECVAEAACPCAVDGVLYQPGDVVPQGCHNCSCIAGRVTNCSQEDCGDVDGPWTPWTPWSECSASCGPGRQRRYRFCSAHPGVPCAEPQPQERPCARQPCHSPDCAAVPGSVFSHCRPPCPRSCDDISHCVWHRQPGCYCTNGTLLDATGTACVALENCTCLDAHSGQRHQPGQSVPRGDGCNNCTCTQGRLLCTGLPCPVPGAWCEWSPWTPCSRSCGDEAATRHRVCSCPAPQQGGAGCPGGLEGHGDTGMQLQHQECPSVPPCPEDGAWAAWGPWSGCGGCGGQAVRTRSCSSPPARFGGLPCAGEARQSRACPWATSSCPECAGGLVAFTCGKPCPHSCEDLREDTACMATPRCLPACACPHGQLLQDGDCVPPELCRCAWAPSKNGSIWEQDGAVPMQELQPGETVQRHCQNCTCKSGTLQCHAEPGCRADGGWSPWGPWSPCSPGCQAGTQLASRQCNNPTPQLGGRGCSGHSQRQRPCPATEGCPEEEPWGEWSPWGPCSASCGGGEQLRHRDCPPPGGCPGLALQSKTCNTHVCREAGCPPGRLYRECQQGEGCPYSCAHLAGRIACFPGGCQEGCHCPTGTLLHHGHCLQECPCVLTAEVLRKLRNSSADLQAAPHLLGTRGPPLALDQELPPGSTIHSACTSCTCLHGRLNCSEPVCPRDGGFSPWGPWSSCSRSCGGLGVMTRRRGCTNPEPARGGRDCAGPRSDSKYCQSPECPAVPTTEPGPGVAGAEEEEGFGPWSPWSPCSKTCTHPERPATKTRERPCVGTAVCSGDGFQEQPCNLPLCSDVPPCQGEDCAGLNCSWAPWGPWTECSRSCGVGRQQRLRAYSPPGASGRWCPGILSAFVQRRFCSLQACKVDGAWSAWSPWSRCDRTCGGGRAVRTRSCTRPPPKNGGQRCPGERHQLHLCNAQPCDDSCPPGMALVTCANHCPRHCGDLQEGIVCREEEHCEPGCRCPNGTLEQDGGCVPLAHCECTDAQGHGWVPGSTHHDGCNNCTCLEGRLRCTDRLCPPLRCPWSRWSRWSPCSVTCGDGQQTRFRTPTAGSWDEECQGEQMENRGCAAGPCPPLCPQGSWERRLGDMWLQGECQRCTCTPEGTVCEDTTCAGAEHCTWGTWSPCSRSCGTGLASREGSCPCPFPGPPGAVCNASTGDGARPHREVQACYLRPCPAECSWSAWSSWGGCSCSSPLQHRYRHRHGTGLCVGLDVELHPCNTSGCSESSCEPPFEFQPCSPPCARLCSTLQHPELCPAQSHCLPGCFCPQGLLEQRSACVPPEQCDCLHTNESGDLVTLSPGDIILLGCKECVCQDGALQCSSEGCQGLLPLSPWSEWTPCSTCLPLFPSHLGDATPHVSVQHRYRACLDPQSGQPWSGDTAVCSAELQQQRLCPDPDICQELCLWSPWGPWGPCQQPCSGSFRLRHRHLQRLAGSGQCQGAQTQSESCNTAVCPGEDCEKQGRVFATTCANSCPRACADLWQHVECVQGGCKPGCRCPQGQLLQDGLCVPTAQCRCGLSGDNGTQELWPGQEATIECHNCTCENGTMVCPALPCPSYGPWSTWSPCSSSCGSGRTSRHRTCEPNPGGVPCMASGMQETAECSPQPCPAGCQLSPWSPWSPCSSSCGGGRSERSRELLGGEEEPCPIPALRQHRVCNVHNCTQECPRSQVHRECANACPHACADLRPQTQCLPQPCQPGCACPPGQVLQDGACVPPEECRCTLDSTMPGVLNLSREEQEQEHAPGSRLQHRCNTCICIRGTFNCSQEECNVDCLWSPWSPWSPCSVTCGMGERLSHRHPLRQRLYEGAECLGPPVRRAACHLPDCACPEGERWQGHEVPPGCEQSCRDILDETPANCTPSPSPGCTCEPGHYRNSSGHCVPSTLCECLHQGQLHQPGSEWQEQCARCRCVDGKANCTDGCTPLSCPEGEVKVREPGRCCPVCRMEWPEEPSSMCRRFTELRNITKGPCSLPNVEVSFCSGRCPSRTAVTPEEPYLQTLCECCSYRLDPGSPVRILSLPCAGGAAEPVVLPIIHSCECSSCQGGDFSKR.

The signal sequence occupies residues 1-18 (MGIVATVLLWVVTEAARG). Residues 19-111 (RWCERTEQVT…ACCAGWSGPH (93 aa)) enclose the EMI domain. 4 N-linked (GlcNAc...) asparagine glycosylation sites follow: Asn-97, Asn-136, Asn-156, and Asn-255. The region spanning 192-358 (ASCTVWAGSR…PDANPELSCS (167 aa)) is the VWFD 1 domain. 2 disulfide bridges follow: Cys-194/Cys-317 and Cys-216/Cys-357. The region spanning 453–508 (CGHGQRYSDCVSSCPASCMAAGTAEEGHCRDDCASGCECTPGLLLDRGACIPQSAC) is the TIL 1 domain. The VWFC 1 domain maps to 508–601 (CPCLHRGHIY…CGGHQPLSCL (94 aa)). In terms of domain architecture, VWFD 2 spans 546–717 (AECAVLGDLH…NKYRVSTDCP (172 aa)). Cystine bridges form between Cys-548–Cys-681, Cys-570–Cys-716, and Cys-592–Cys-600. The N-linked (GlcNAc...) asparagine glycan is linked to Asn-801. Residues 809-868 (CRGGQVYQECSSPCGRTCADLRLDGASSCPSLDNICVSGCNCPEGPVLDDGGQCVPPGVC) form the TIL 2 domain. The VWFC 2 domain maps to 868–926 (CPCQHSSQLYPAGSKIRQGCNACMCTAGTWSCTDAPCPDAAFCPGDLVYVFGSCLRTCD). N-linked (GlcNAc...) asparagine glycosylation is found at Asn-931 and Asn-972. The 171-residue stretch at 998–1168 (GTCVATGDPH…NSWRVSLLCP (171 aa)) folds into the VWFD 3 domain. 3 disulfides stabilise this stretch: Cys-1000/Cys-1132, Cys-1022/Cys-1167, and Cys-1043/Cys-1050. The 57-residue stretch at 1263–1319 (CDGGQEYSACGPPCPQTCRNLGLELPEHCDTMSCLEGCFCPEGKVLHEGSCIDPAEC) folds into the TIL 3 domain. Asn-1340 is a glycosylation site (N-linked (GlcNAc...) asparagine). LDL-receptor class A domains follow at residues 1362 to 1398 (HCPDSEFPCRSGGRCVPGAWLCDNEDDCGDGSDEVCA), 1400 to 1436 (HCAPHQHRCADGQCVPWGARCDGLSDCGDGSDERGCP), 1439 to 1477 (PCAPPEFRCASGRCIPRAHVCNGELDCGFADDSDEAGCS), 1479 to 1515 (SCSVGEFQCAAGRCVPYPHRCNGHDDCGDFSDERGCV), 1515 to 1551 (VCPAGHFQCPDAQCLPPAALCDGMQDCGDGTDEAFCP), and 1555 to 1593 (TCAPGQLPCPDGSCVSQVKLCDGIWDCRDGWDESSVRCM). 18 cysteine pairs are disulfide-bonded: Cys-1363–Cys-1376, Cys-1370–Cys-1389, Cys-1383–Cys-1397, Cys-1401–Cys-1413, Cys-1408–Cys-1426, Cys-1420–Cys-1435, Cys-1440–Cys-1452, Cys-1447–Cys-1465, Cys-1459–Cys-1476, Cys-1480–Cys-1492, Cys-1487–Cys-1505, Cys-1499–Cys-1514, Cys-1516–Cys-1528, Cys-1523–Cys-1541, Cys-1535–Cys-1550, Cys-1556–Cys-1568, Cys-1563–Cys-1581, and Cys-1575–Cys-1592. Residue Asn-1610 is glycosylated (N-linked (GlcNAc...) asparagine). 3 consecutive LDL-receptor class A domains span residues 1616–1652 (VCGPYEFPCRSGQCVPRGWVCDSEADCPDNSDELGCN), 1654–1693 (SCVLGHFPCALGAHCIHYDHLCDGIPHCPDHSDESDDNCG), and 1699–1734 (PCPGHFVCNNRVCVNATRVCDGALDCPQGEDELACE). 3 disulfides stabilise this stretch: Cys-1617–Cys-1629, Cys-1624–Cys-1642, and Cys-1636–Cys-1651. Residue Asn-1652 is glycosylated (N-linked (GlcNAc...) asparagine). 6 cysteine pairs are disulfide-bonded: Cys-1655–Cys-1668, Cys-1662–Cys-1681, Cys-1675–Cys-1692, Cys-1700–Cys-1711, Cys-1706–Cys-1724, and Cys-1718–Cys-1733. The N-linked (GlcNAc...) asparagine glycan is linked to Asn-1713. Residue Asn-1743 is glycosylated (N-linked (GlcNAc...) asparagine). One can recognise an LDL-receptor class A 10 domain in the interval 1748-1790 (PCAEYSCRDGDCITFKQVCNGLPDCRDGDMASGWLPSDEWDCG). Disulfide bonds link Cys-1749-Cys-1759, Cys-1754-Cys-1772, Cys-1766-Cys-1789, Cys-1801-Cys-1837, Cys-1805-Cys-1842, and Cys-1816-Cys-1827. 2 consecutive TSP type-1 domains span residues 1789-1843 (CGQW…TACP) and 1845-1903 (DGAW…DGCP). N-linked (GlcNAc...) asparagine glycosylation occurs at Asn-1856. 3 cysteine pairs are disulfide-bonded: Cys-1857/Cys-1897, Cys-1861/Cys-1902, and Cys-1871/Cys-1881. The 55-residue stretch at 1907-1961 (CPGGLQPRPCAPCPASCADLASRAPCRREQCTPGCWCAEGLVLDGERGCVRPREC) folds into the TIL 4 domain. EGF-like domains lie at 1919–1956 (CPASCADLASRAPCRREQCTPGCWCAEGLVLDGERGCV) and 1957–1983 (RPRECRCEVDGLRYWPGQRMKLNCRLC). The VWFC 3 domain occupies 1961–2019 (CRCEVDGLRYWPGQRMKLNCRLCTCLDGQPRRCRHNPACSVSCSWSAWSPWGECLGPCG). Residues 2002–2058 (SCSWSAWSPWGECLGPCGVQSIQWSFRSPSHPGKHGTNRQCRGIYRKARRCQTEPCQ) enclose the TSP type-1 3 domain. Intrachain disulfides connect Cys-2003-Cys-2042, Cys-2014-Cys-2018, and Cys-2052-Cys-2057. A VWFC 4 domain is found at 2058-2120 (QECEHQGRSR…GKGDSCCFCA (63 aa)). N-linked (GlcNAc...) asparagine glycans are attached at residues Asn-2125 and Asn-2230. Intrachain disulfides connect Cys-2162/Cys-2310, Cys-2328/Cys-2339, Cys-2335/Cys-2352, and Cys-2346/Cys-2361. The region spanning 2162-2310 (CYSPLGIASL…IFLRAELLGC (149 aa)) is the F5/8 type C domain. An LDL-receptor class A 11 domain is found at 2327-2362 (PCGTGEFWCGVSCVTASRRCDGATDCPGGADEAGCE). The tract at residues 2352 to 2373 (CPGGADEAGCEPPSSTTLPTHP) is disordered. Residues 2364 to 2373 (PSSTTLPTHP) are compositionally biased toward polar residues. LDL-receptor class A domains lie at 2481-2517 (LCPPDQFLCDALGCVDAAMVCDGQQDCLDGSDEAHCG) and 2538-2574 (TCSPKQFSCGTGECLALEKRCDLSRDCADGSDESSCA). 12 disulfide bridges follow: Cys-2482–Cys-2494, Cys-2489–Cys-2507, Cys-2501–Cys-2516, Cys-2539–Cys-2551, Cys-2546–Cys-2564, Cys-2558–Cys-2573, Cys-2576–Cys-2612, Cys-2587–Cys-2591, Cys-2622–Cys-2627, Cys-2642–Cys-2679, Cys-2646–Cys-2684, and Cys-2657–Cys-2669. 2 TSP type-1 domains span residues 2575–2628 (DCIL…RACP) and 2630–2685 (PGAW…QPCG). Residues 2708-2750 (PPCPQVCGDLSATSSCQSPCQEGCRCPPGLFLQEGTCVNASQC) enclose the TIL 5 domain. An N-linked (GlcNAc...) asparagine glycan is attached at Asn-2746. TSP type-1 domains follow at residues 2790–2844 (ACAW…TPCA), 2849–2903 (SSGW…APCP), and 2905–2958 (AGVW…RPCG). Cystine bridges form between Cys-2791–Cys-2829, Cys-2802–Cys-2806, Cys-2839–Cys-2843, Cys-2861–Cys-2897, Cys-2865–Cys-2902, Cys-2881–Cys-2887, Cys-2917–Cys-2952, Cys-2921–Cys-2957, and Cys-2932–Cys-2942. Residues 2971–3020 (EECRHSEGRCPWICQDLGAGVACTAQCQPGCHCPAGLLLQNGTCVPPSHC) enclose the TIL 6 domain. N-linked (GlcNAc...) asparagine glycans are attached at residues Asn-3011, Asn-3042, and Asn-3065. A VWFC 5 domain is found at 3020–3077 (CLCHHRGHLYQPGDINALDTCNNCTCVTGQMVCSTETCPVPCTWSNWTAWSTCSHSCD). TSP type-1 domains follow at residues 3060–3115 (PCTW…QPCR) and 3117–3158 (VAPW…APCP). Cystine bridges form between Cys-3061–Cys-3099, Cys-3072–Cys-3076, and Cys-3109–Cys-3114. Asn-3136 carries N-linked (GlcNAc...) asparagine glycosylation. The TIL 7 domain maps to 3165 to 3217 (CPPGKQWQACAQGAASCAELSAAPPADGSCHPGCYCPPGALLLNNECVAEAAC). Residues 3217-3275 (CPCAVDGVLYQPGDVVPQGCHNCSCIAGRVTNCSQEDCGDVDGPWTPWTPWSECSASCG) enclose the VWFC 6 domain. 2 N-linked (GlcNAc...) asparagine glycosylation sites follow: Asn-3238 and Asn-3248. Residues 3258-3309 (DGPWTPWTPWSECSASCGPGRQRRYRFCSAHPGVPCAEPQPQERPCARQPCH) enclose the TSP type-1 11 domain. 3 disulfide bridges follow: Cys-3270–Cys-3303, Cys-3274–Cys-3308, and Cys-3285–Cys-3293. Asn-3350, Asn-3366, and Asn-3392 each carry an N-linked (GlcNAc...) asparagine glycan. TSP type-1 domains are found at residues 3410–3475 (PGAW…PPCP) and 3477–3532 (DGAW…SSCP). Cystine bridges form between Cys-3422–Cys-3468, Cys-3426–Cys-3474, Cys-3437–Cys-3449, Cys-3489–Cys-3524, Cys-3492–Cys-3531, and Cys-3502–Cys-3514. The region spanning 3534–3589 (CAGGLVAFTCGKPCPHSCEDLREDTACMATPRCLPACACPHGQLLQDGDCVPPELC) is the TIL 8 domain. N-linked (GlcNAc...) asparagine glycosylation is found at Asn-3598 and Asn-3625. 2 TSP type-1 domains span residues 3644-3700 (DGGW…EGCP) and 3702-3751 (EEPW…HVCR). Intrachain disulfides connect Cys-3656/Cys-3693, Cys-3660/Cys-3699, Cys-3671/Cys-3683, Cys-3714/Cys-3745, Cys-3718/Cys-3750, and Cys-3729/Cys-3735. N-linked (GlcNAc...) asparagine glycans are attached at residues Asn-3823 and Asn-3869. 4 TSP type-1 domains span residues 3878–3934 (DGGF…PECP), 3951–4004 (EEGF…PLCS), 4018–4074 (NCSW…QACK), and 4076–4131 (DGAW…QPCD). Intrachain disulfides connect Cys-3890–Cys-3928, Cys-3894–Cys-3933, Cys-3906–Cys-3918, Cys-3963–Cys-3998, Cys-3967–Cys-4003, and Cys-3982–Cys-3988. A disordered region spans residues 3932–3951 (ECPAVPTTEPGPGVAGAEEE). Asn-4018 carries N-linked (GlcNAc...) asparagine glycosylation. Intrachain disulfides connect Cys-4019/Cys-4055, Cys-4030/Cys-4034, Cys-4068/Cys-4073, Cys-4088/Cys-4125, Cys-4092/Cys-4130, and Cys-4103/Cys-4115. A TIL 9 domain is found at 4134-4189 (CPPGMALVTCANHCPRHCGDLQEGIVCREEEHCEPGCRCPNGTLEQDGGCVPLAHC). Asn-4174 and Asn-4211 each carry an N-linked (GlcNAc...) asparagine glycan. 3 consecutive TSP type-1 domains span residues 4230–4282 (RCPW…GPCP), 4322–4384 (GAEH…RPCP), and 4386–4433 (ECSW…SGCS). Intrachain disulfides connect Cys-4231–Cys-4266, Cys-4242–Cys-4246, and Cys-4276–Cys-4281. N-linked (GlcNAc...) asparagine glycosylation occurs at Asn-4362. Cystine bridges form between Cys-4387–Cys-4417, Cys-4398–Cys-4400, and Cys-4427–Cys-4432. N-linked (GlcNAc...) asparagine glycosylation occurs at Asn-4428. In terms of domain architecture, TIL 10 spans 4437 to 4492 (CEPPFEFQPCSPPCARLCSTLQHPELCPAQSHCLPGCFCPQGLLEQRSACVPPEQC). N-linked (GlcNAc...) asparagine glycosylation occurs at Asn-4498. 2 consecutive TSP type-1 domains span residues 4537 to 4608 (LPLS…DICQ) and 4610 to 4662 (LCLW…AVCP). Disulfide bonds link Cys-4548–Cys-4601, Cys-4551–Cys-4607, Cys-4575–Cys-4591, Cys-4611–Cys-4646, Cys-4622–Cys-4626, and Cys-4656–Cys-4661. Residues 4675–4722 (TTCANSCPRACADLWQHVECVQGGCKPGCRCPQGQLLQDGLCVPTAQC) enclose the TIL 11 domain. Asn-4730, Asn-4747, and Asn-4752 each carry an N-linked (GlcNAc...) asparagine glycan. TSP type-1 domains are found at residues 4762–4815 (CPSY…QPCP) and 4817–4869 (GCQL…HNCT). Intrachain disulfides connect Cys-4774/Cys-4809, Cys-4778/Cys-4814, Cys-4789/Cys-4798, Cys-4818/Cys-4852, Cys-4829/Cys-4833, and Cys-4863/Cys-4868. An N-linked (GlcNAc...) asparagine glycan is attached at Asn-4867. Residues 4872 to 4926 (CPRSQVHRECANACPHACADLRPQTQCLPQPCQPGCACPPGQVLQDGACVPPEEC) form the TIL 12 domain. N-linked (GlcNAc...) asparagine glycosylation is found at Asn-4939 and Asn-4970. A TSP type-1 27 domain is found at 4979 to 5033 (DCLWSPWSPWSPCSVTCGMGERLSHRHPLRQRLYEGAECLGPPVRRAACHLPDCA). 3 disulfide bridges follow: Cys-4980/Cys-5017, Cys-4991/Cys-4995, and Cys-5027/Cys-5032. N-linked (GlcNAc...) asparagine glycosylation is found at Asn-5081, Asn-5122, and Asn-5169. Residues 5092-5150 (CECLHQGQLHQPGSEWQEQCARCRCVDGKANCTDGCTPLSCPEGEVKVREPGRCCPVCR) form the VWFC 7 domain. Cystine bridges form between Cys-5161-Cys-5209, Cys-5175-Cys-5226, Cys-5185-Cys-5242, and Cys-5189-Cys-5244. The CTCK domain maps to 5161–5248 (CRRFTELRNI…IHSCECSSCQ (88 aa)).

Belongs to the thrombospondin family.

Its subcellular location is the secreted. The protein resides in the extracellular space. Functionally, involved in the modulation of neuronal aggregation. May be involved in developmental events during the formation of the central nervous system. This chain is SCO-spondin (SSPO), found in Gallus gallus (Chicken).